Reading from the N-terminus, the 354-residue chain is UDP-3-O-acylglucosamine N-acyltransferase (354 aa).

His-247 functions as the Proton acceptor in the catalytic mechanism.

Belongs to the transferase hexapeptide repeat family. LpxD subfamily. Homotrimer.

It carries out the reaction a UDP-3-O-[(3R)-3-hydroxyacyl]-alpha-D-glucosamine + a (3R)-hydroxyacyl-[ACP] = a UDP-2-N,3-O-bis[(3R)-3-hydroxyacyl]-alpha-D-glucosamine + holo-[ACP] + H(+). It functions in the pathway bacterial outer membrane biogenesis; LPS lipid A biosynthesis. Functionally, catalyzes the N-acylation of UDP-3-O-acylglucosamine using 3-hydroxyacyl-ACP as the acyl donor. Is involved in the biosynthesis of lipid A, a phosphorylated glycolipid that anchors the lipopolysaccharide to the outer membrane of the cell. The protein is UDP-3-O-acylglucosamine N-acyltransferase of Chlamydia trachomatis serovar L2b (strain UCH-1/proctitis).